The chain runs to 156 residues: ATP synthase subunit b (156 aa).

The helical transmembrane segment at 7–27 (LIGQAIWFALFVFFCMKFVWP) threads the bilayer.

The protein belongs to the ATPase B chain family. As to quaternary structure, F-type ATPases have 2 components, F(1) - the catalytic core - and F(0) - the membrane proton channel. F(1) has five subunits: alpha(3), beta(3), gamma(1), delta(1), epsilon(1). F(0) has three main subunits: a(1), b(2) and c(10-14). The alpha and beta chains form an alternating ring which encloses part of the gamma chain. F(1) is attached to F(0) by a central stalk formed by the gamma and epsilon chains, while a peripheral stalk is formed by the delta and b chains.

It localises to the cell inner membrane. Functionally, f(1)F(0) ATP synthase produces ATP from ADP in the presence of a proton or sodium gradient. F-type ATPases consist of two structural domains, F(1) containing the extramembraneous catalytic core and F(0) containing the membrane proton channel, linked together by a central stalk and a peripheral stalk. During catalysis, ATP synthesis in the catalytic domain of F(1) is coupled via a rotary mechanism of the central stalk subunits to proton translocation. Its function is as follows. Component of the F(0) channel, it forms part of the peripheral stalk, linking F(1) to F(0). The protein is ATP synthase subunit b of Alcanivorax borkumensis (strain ATCC 700651 / DSM 11573 / NCIMB 13689 / SK2).